The sequence spans 164 residues: Cyclic pyranopterin monophosphate synthase (164 aa).

Substrate-binding positions include 77–79 (LCH) and 115–116 (ME). The active site involves Asp-130.

It belongs to the MoaC family. As to quaternary structure, homohexamer; trimer of dimers.

It catalyses the reaction (8S)-3',8-cyclo-7,8-dihydroguanosine 5'-triphosphate = cyclic pyranopterin phosphate + diphosphate. It functions in the pathway cofactor biosynthesis; molybdopterin biosynthesis. Functionally, catalyzes the conversion of (8S)-3',8-cyclo-7,8-dihydroguanosine 5'-triphosphate to cyclic pyranopterin monophosphate (cPMP). The polypeptide is Cyclic pyranopterin monophosphate synthase (Rhizobium meliloti (strain 1021) (Ensifer meliloti)).